Consider the following 217-residue polypeptide: uncharacterized protein (217 aa).

A helical membrane pass occupies residues 26-48 (VFMRGYVVGLVLALMLVTAPAMA).

Its subcellular location is the membrane. This is an uncharacterized protein from Archaeoglobus fulgidus (strain ATCC 49558 / DSM 4304 / JCM 9628 / NBRC 100126 / VC-16).